The primary structure comprises 526 residues: ATP synthase subunit alpha (526 aa).

ATP is bound at residue 171–178 (GDRQTGKT).

This sequence belongs to the ATPase alpha/beta chains family. In terms of assembly, F-type ATPases have 2 components, CF(1) - the catalytic core - and CF(0) - the membrane proton channel. CF(1) has five subunits: alpha(3), beta(3), gamma(1), delta(1), epsilon(1). CF(0) has four main subunits: a(1), b(1), b'(1) and c(9-12).

Its subcellular location is the cell inner membrane. The catalysed reaction is ATP + H2O + 4 H(+)(in) = ADP + phosphate + 5 H(+)(out). In terms of biological role, produces ATP from ADP in the presence of a proton gradient across the membrane. The alpha chain is a regulatory subunit. The protein is ATP synthase subunit alpha of Chlorobium chlorochromatii (strain CaD3).